Consider the following 493-residue polypeptide: uncharacterized protein (493 aa).

Residue S328 is modified to Phosphoserine. Residues 466–486 show a composition bias toward polar residues; that stretch reads AESNSGRGQNSKTKTTSVNLS. A disordered region spans residues 466–493; that stretch reads AESNSGRGQNSKTKTTSVNLSRNKRTRT.

This is an uncharacterized protein from Schizosaccharomyces pombe (strain 972 / ATCC 24843) (Fission yeast).